Consider the following 559-residue polypeptide: MAAVQATTGIQANTKTSAEPVRPLANFPPSVWGDRFLSFSLDKSEFERYAIAMEKPKEDVRKLIVDSTMDSNEKLGLIYSVHRVGLTYMFLQEIESQLDKLFNEFSLQDYEEVDLYTISINFQVFRHLGYKLPCDVFKKFKDAISGTFKESITSDVRGMLGLYESAQLRIRGEKILDEASVFIEGKLKSVVNTLEGNLAQQVKQSLRRPFHQGMPMVEARLYFSNYEEECSSHDSLFKLAKLHFKYLELQQKEELRIVTKWYKDMRFQETTPYIRDRVPEIYLWILGLYFEPRYSLARIIATKITLFLVVLDDTYDAYATIEEIRLLTDAMNKWDISAMEQIPEYIRPFYKVLLDEYAEIGKRMAKEGRADTVIASKEAFQDIARGYLEEAEWTNSGYVASFPEYMKNGLITSAYNVISKSALVGMGEIVSEDALAWYESHPKPLQASELISRLQDDVMTYQFERERGQSATGVDAYIKTYGVSEKKAIDELKIMIENAWKDINEGCLKPRQVSMDLLAPILNLARMIDVVYRYDDGFTFPGSTLKEYINLLFVDSLPV.

Positions 312, 316, 456, 460, and 464 each coordinate Mg(2+). The DDXXD motif motif lies at 312–316 (DDTYD).

It belongs to the terpene synthase family. As to quaternary structure, monomer. The cofactor is Mg(2+). Expressed in glandular trichomes of all aerial tissues, with highest levels in tissues accumulating parthenolide (e.g. flowers and, to some extent, leaves).

It catalyses the reaction (2E,6E)-farnesyl diphosphate = (+)-(R)-germacrene A + diphosphate. It participates in secondary metabolite biosynthesis; terpenoid biosynthesis. Sesquiterpene synthase involved in germacrene A biosynthesis. Germacrene A is a precursor of several sesquiterpene lactones. In Tanacetum parthenium (Feverfew), this protein is Germacrene A synthase.